The chain runs to 208 residues: MSTVVVKGNVNGGVQQPRRRRRQSLRRRANRVQPVVMVTAPGQPRRRRRRRGGNRRSRRTGVPRGRGSSETFVFTKDNLMGNSQGSFTFGPSLSDCPAFKDGILKAYHEYKITSILLQFVSEASSTSSGSIAYELDPHCKVSSLQSYVNQFQIPQGGAKTYQARMINGVEWHDSSEDQCRILWKGNGKSSDTAGSFRVTIRVALQNPK.

Over residues 1 to 16 (MSTVVVKGNVNGGVQQ) the composition is skewed to low complexity. Residues 1–69 (MSTVVVKGNV…TGVPRGRGSS (69 aa)) form a disordered region. Composition is skewed to basic residues over residues 17–30 (PRRR…RRAN) and 44–61 (PRRR…RRTG).

The protein belongs to the luteoviruses capsid protein family.

The protein localises to the virion. Its function is as follows. Major capsid protein that self-assembles to form an icosahedral capsid with a T=3 symmetry, about 23 nm in diameter, and consisting of 180 capsid proteins monomers. Most of the 180 monomers are the major capsid protein, but a small percentage contain the minor capsid protein, which has a long C-terminal extension. The polypeptide is Major capsid protein (Potato leafroll virus (strain Potato/Netherlands/Wageningen/1989) (PLrV)).